The primary structure comprises 209 residues: Response regulator protein VraR (209 aa).

Positions 4–120 constitute a Response regulatory domain; that stretch reads KVLFVDDHEM…DIADAVRKTS (117 aa). D55 carries the 4-aspartylphosphate modification. The HTH luxR-type domain occupies 141–206; sequence RAELYEMLTE…QAVIYAFQHN (66 aa). Residues 165–184 constitute a DNA-binding region (H-T-H motif); sequence NQEIASASHITIKTVKTHVS.

Homodimer. In terms of processing, phosphorylated by VraS. Phosphorylation state of VraR controls dimerization of the protein.

Its subcellular location is the cytoplasm. In terms of biological role, member of the two-component regulatory system VraS/VraR involved in the control of the cell wall peptidoglycan biosynthesis. Upon cellular stress, the histidine kinase VraS transfers the phosphoryl group onto VraR. Upon phosphorylation, VraR dimerizes at the N-terminal domain. In turn, phosphorylation-induced dimerization expands and enhances the VraR binding to its own promoter leading to increased expression and subsequent modulation of as many as 40 genes, which ultimately constitute the S.aureus response to cell wall damage. In addition, inhibits the host autophagic flux and delays the early stage of autophagosome formation, thereby promoting bacterial survival. Facilitates the ability of S.aureus to resist host polymorphonuclear leukocytes-mediated phagocytosis and killing thus contributing to immune evasion. In Staphylococcus aureus (strain Mu3 / ATCC 700698), this protein is Response regulator protein VraR (vraR).